A 356-amino-acid polypeptide reads, in one-letter code: Rhomboid-related protein 1 (356 aa).

7 consecutive transmembrane segments (helical) span residues 107–129 (WCPPPIFMLLITIIQVGIFFFYW), 172–194 (YMFLHAGLNHLLGNVIIQLLVGI), 201–223 (KIWRIGPIYLLAVTSGSLLQYAI), 227–249 (SLLVGASAGVYALIFAHVANVIL), 256–275 (LRWIRVLVLFVFIFLDFGGA), 290–312 (HLAHIAGAVTGLFFGYVVLYNVV), and 319–341 (IIRYVCLFLYSAFFATTIIFVIV). The active-site Nucleophile is the S233. The active site involves H293.

This sequence belongs to the peptidase S54 family.

Its subcellular location is the membrane. The enzyme catalyses Cleaves type-1 transmembrane domains using a catalytic dyad composed of serine and histidine that are contributed by different transmembrane domains.. In terms of biological role, serine protease which activates lin-3 isoform a in the proximal vulva precursor cells (VPC) during vulva development to transmit the inductive anchor cell signal to the distal VPCs. In Caenorhabditis elegans, this protein is Rhomboid-related protein 1.